The primary structure comprises 251 residues: Methionine aminopeptidase (251 aa).

H77 contributes to the substrate binding site. D94, D105, and H169 together coordinate a divalent metal cation. Residue H176 participates in substrate binding. A divalent metal cation is bound by residues E202 and E233.

Belongs to the peptidase M24A family. Methionine aminopeptidase type 1 subfamily. Monomer. Co(2+) is required as a cofactor. Zn(2+) serves as cofactor. It depends on Mn(2+) as a cofactor. Requires Fe(2+) as cofactor.

The enzyme catalyses Release of N-terminal amino acids, preferentially methionine, from peptides and arylamides.. In terms of biological role, removes the N-terminal methionine from nascent proteins. The N-terminal methionine is often cleaved when the second residue in the primary sequence is small and uncharged (Met-Ala-, Cys, Gly, Pro, Ser, Thr, or Val). Requires deformylation of the N(alpha)-formylated initiator methionine before it can be hydrolyzed. This chain is Methionine aminopeptidase, found in Mycoplasma capricolum subsp. capricolum (strain California kid / ATCC 27343 / NCTC 10154).